A 944-amino-acid chain; its full sequence is Nonsense-mediated mRNA decay factor SMG8 (944 aa).

Disordered regions lie at residues 559 to 601 (LNNG…SNCC) and 629 to 654 (ASSE…TDNE). Positions 568–589 (QDEDAEEDEAEEEEGQEQEQPT) are enriched in acidic residues. The span at 629–640 (ASSEQLLNSEQN) shows a compositional bias: polar residues. The segment covering 641 to 650 (TTSSGTSSAD) has biased composition (low complexity).

It belongs to the SMG8 family.

Its function is as follows. Involved in nonsense-mediated decay (NMD) of mRNAs containing premature stop codons. Probable component of kinase complex containing nonC and recruited to stalled ribosomes. The chain is Nonsense-mediated mRNA decay factor SMG8 from Drosophila melanogaster (Fruit fly).